A 320-amino-acid polypeptide reads, in one-letter code: Cytochrome f (320 aa).

The first 35 residues, 1–35 (MQTRNTFSWIREEITRSISVSLMIYIITWASISGA), serve as a signal peptide directing secretion. Tyrosine 36, cysteine 56, cysteine 59, and histidine 60 together coordinate heme. The chain crosses the membrane as a helical span at residues 286–306 (VQGLLFFLGSVVLAQIFLVLK).

This sequence belongs to the cytochrome f family. The 4 large subunits of the cytochrome b6-f complex are cytochrome b6, subunit IV (17 kDa polypeptide, petD), cytochrome f and the Rieske protein, while the 4 small subunits are PetG, PetL, PetM and PetN. The complex functions as a dimer. Heme is required as a cofactor.

The protein localises to the plastid. It is found in the chloroplast thylakoid membrane. In terms of biological role, component of the cytochrome b6-f complex, which mediates electron transfer between photosystem II (PSII) and photosystem I (PSI), cyclic electron flow around PSI, and state transitions. In Capsella bursa-pastoris (Shepherd's purse), this protein is Cytochrome f.